The chain runs to 329 residues: Anthranilate phosphoribosyltransferase (329 aa).

Residues G78, 81-82, 88-91, 106-114, and S118 each bind 5-phospho-alpha-D-ribose 1-diphosphate; these read GD, NLST, and KHGNRAASS. G78 contributes to the anthranilate binding site. S90 serves as a coordination point for Mg(2+). N109 is an anthranilate binding site. Position 164 (R164) interacts with anthranilate. Residues D221 and E222 each contribute to the Mg(2+) site.

Belongs to the anthranilate phosphoribosyltransferase family. Homodimer. Mg(2+) is required as a cofactor.

It carries out the reaction N-(5-phospho-beta-D-ribosyl)anthranilate + diphosphate = 5-phospho-alpha-D-ribose 1-diphosphate + anthranilate. Its pathway is amino-acid biosynthesis; L-tryptophan biosynthesis; L-tryptophan from chorismate: step 2/5. Catalyzes the transfer of the phosphoribosyl group of 5-phosphorylribose-1-pyrophosphate (PRPP) to anthranilate to yield N-(5'-phosphoribosyl)-anthranilate (PRA). This chain is Anthranilate phosphoribosyltransferase, found in Thermus thermophilus (strain ATCC BAA-163 / DSM 7039 / HB27).